The sequence spans 694 residues: PTS system fructose-specific EIIABC component (694 aa).

The 146-residue stretch at 4 to 149 (PLLSAELFFN…NGLINLIDSF (146 aa)) folds into the PTS EIIA type-2 domain. The Tele-phosphohistidine intermediate; for EIIA activity role is filled by His68. His68 is modified (phosphohistidine; by HPr). Positions 179–275 (FVAVTACPTG…PQTVYDQVVK (97 aa)) constitute a PTS EIIB type-2 domain. The active-site Phosphocysteine intermediate; for EIIB activity is Cys185. Cys185 carries the phosphocysteine; by EIIA modification. The 378-residue stretch at 310–687 (IYRAILSGVS…NLLVVRKKTK (378 aa)) folds into the PTS EIIC type-2 domain. 10 helical membrane passes run 318-338 (VSYM…AFLI), 364-384 (GGLS…FALV), 390-410 (LPGF…IDIV), 422-442 (VSSG…LIIV), 461-481 (ILFI…VINI), 502-522 (LAPL…GGPV), 542-562 (VAMA…AIAA), 576-596 (AAYA…IPFV), 602-622 (IMLA…GAFA), and 655-675 (GVGL…GIII).

The protein localises to the cell membrane. The catalysed reaction is D-fructose(out) + N(pros)-phospho-L-histidyl-[protein] = D-fructose 1-phosphate(in) + L-histidyl-[protein]. The phosphoenolpyruvate-dependent sugar phosphotransferase system (sugar PTS), a major carbohydrate active transport system, catalyzes the phosphorylation of incoming sugar substrates concomitantly with their translocation across the cell membrane. This system is involved in fructose transport. The polypeptide is PTS system fructose-specific EIIABC component (Mycoplasma pneumoniae (strain ATCC 29342 / M129 / Subtype 1) (Mycoplasmoides pneumoniae)).